Here is a 190-residue protein sequence, read N- to C-terminus: Putative glutathione-dependent formaldehyde-activating enzyme (190 aa).

The CENP-V/GFA domain occupies 19-165; that stretch reads FKGGKLYCHC…FRKVGLQPYD (147 aa). 7 residues coordinate Zn(2+): Cys26, Cys28, Cys47, Cys49, Cys52, Cys94, and Cys97.

This sequence belongs to the Gfa family. Requires Zn(2+) as cofactor.

It catalyses the reaction S-(hydroxymethyl)glutathione = glutathione + formaldehyde. The protein operates within one-carbon metabolism; formaldehyde degradation; formate from formaldehyde (glutathione route): step 1/3. Its function is as follows. Catalyzes the condensation of formaldehyde and glutathione to S-hydroxymethylglutathione. This Pyrenophora teres f. teres (strain 0-1) (Barley net blotch fungus) protein is Putative glutathione-dependent formaldehyde-activating enzyme.